Here is a 530-residue protein sequence, read N- to C-terminus: Autoinducer-2 kinase (530 aa).

This sequence belongs to the FGGY kinase family.

The protein localises to the cytoplasm. The enzyme catalyses (S)-4,5-dihydroxypentane-2,3-dione + ATP = (2S)-2-hydroxy-3,4-dioxopentyl phosphate + ADP + H(+). Catalyzes the phosphorylation of autoinducer-2 (AI-2) to phospho-AI-2, which subsequently inactivates the transcriptional regulator LsrR and leads to the transcription of the lsr operon. Phosphorylates the ring-open form of (S)-4,5-dihydroxypentane-2,3-dione (DPD), which is the precursor to all AI-2 signaling molecules, at the C5 position. The polypeptide is Autoinducer-2 kinase (Escherichia coli (strain K12 / DH10B)).